Reading from the N-terminus, the 359-residue chain is Trans-enoyl reductase RAP1 (359 aa).

49–52 (CDFK) is an NADP(+) binding site. 137-144 (TCIATACM) provides a ligand contact to substrate. NADP(+) contacts are provided by residues 195-198 (SPKN), Tyr213, and 260-261 (LE). 281 to 285 (GQMIL) provides a ligand contact to substrate. 350–351 (VA) serves as a coordination point for NADP(+).

It belongs to the zinc-containing alcohol dehydrogenase family. In terms of assembly, monomer.

It participates in secondary metabolite biosynthesis. Its function is as follows. Trans-enoyl reductase; part of the gene cluster that mediates the biosynthesis of a tyrosine-derived cytochalasan acting as a fungal signal recognized by resistant rice plants and leads to avirulence in Pi33 resistant rice cultivars. The first step in the pathway is catalyzed by the hybrid PKS-NRPS ACE1, assisted by the enoyl reductase RAP1, that are responsible for fusion of the tyrosine precursor and the polyketide backbone. The polyketide synthase module (PKS) of ACE1 is responsible for the synthesis of the polyketide backbone and the downstream nonribosomal peptide synthetase (NRPS) amidates the carboxyl end of the polyketide with the tyrosine precursor. Because ACE1 lacks a designated enoylreductase (ER) domain, the required activity is provided the enoyl reductase RAP1. Reduction by the hydrolyase ORFZ, followed by dehydration and intra-molecular Diels-Alder cyclization by the Diels-Alderase ORF3 then yield the required isoindolone-fused macrocycle. A number of oxidative steps catalyzed by the tailoring enzymes identified within the cluster, including cytochrome P450 monooxygenases CYP1 to CYP4, the FAD-linked oxidoreductase OXR2 and the short-chain dehydrogenase/reductase OXR1, are further required to afford the final cytochalasans that confer avirulence and which have still to be identified. The monooxygenase CYP1 has been shown to be a site-selective C-18 hydroxylase whereas the function of CYP3 is the site-selective epoxidation of the C-6/C-7 olefin that is present in some intermediate compounds. Finally, SYN2 and RAP2 are not required for avirulence in Pi33 resistant rice cultivars. This chain is Trans-enoyl reductase RAP1, found in Pyricularia oryzae (strain 70-15 / ATCC MYA-4617 / FGSC 8958) (Rice blast fungus).